Consider the following 252-residue polypeptide: Glucosamine-6-phosphate deaminase (252 aa).

Residue Asp64 is the Proton acceptor; for enolization step of the active site. Asn130 serves as the catalytic For ring-opening step. The active-site Proton acceptor; for ring-opening step is the His132. Glu137 serves as the catalytic For ring-opening step.

The protein belongs to the glucosamine/galactosamine-6-phosphate isomerase family. NagB subfamily.

The enzyme catalyses alpha-D-glucosamine 6-phosphate + H2O = beta-D-fructose 6-phosphate + NH4(+). It functions in the pathway amino-sugar metabolism; N-acetylneuraminate degradation; D-fructose 6-phosphate from N-acetylneuraminate: step 5/5. In terms of biological role, catalyzes the reversible isomerization-deamination of glucosamine 6-phosphate (GlcN6P) to form fructose 6-phosphate (Fru6P) and ammonium ion. This chain is Glucosamine-6-phosphate deaminase, found in Exiguobacterium sibiricum (strain DSM 17290 / CCUG 55495 / CIP 109462 / JCM 13490 / 255-15).